Consider the following 235-residue polypeptide: Flagellar L-ring protein (235 aa).

Positions 1-18 are cleaved as a signal peptide; the sequence is MNKIAGTLFLLAGLAMAG. Cysteine 19 carries the N-palmitoyl cysteine lipid modification. The S-diacylglycerol cysteine moiety is linked to residue cysteine 19.

Belongs to the FlgH family. As to quaternary structure, the basal body constitutes a major portion of the flagellar organelle and consists of four rings (L,P,S, and M) mounted on a central rod.

Its subcellular location is the cell outer membrane. It localises to the bacterial flagellum basal body. In terms of biological role, assembles around the rod to form the L-ring and probably protects the motor/basal body from shearing forces during rotation. This chain is Flagellar L-ring protein, found in Chelativorans sp. (strain BNC1).